Here is a 56-residue protein sequence, read N- to C-terminus: Potassium channel toxin alpha-KTx 9.8 (56 aa).

Residues 1–19 (MSRLFTLVLIVLAMNVMMA) form the signal peptide. A propeptide spanning residues 20-28 (IISDPVVEA) is cleaved from the precursor. 3 disulfide bridges follow: cysteine 31-cysteine 47, cysteine 34-cysteine 52, and cysteine 38-cysteine 54.

It belongs to the short scorpion toxin superfamily. Potassium channel inhibitor family. Alpha-KTx 09 subfamily. As to expression, expressed by the venom gland.

Its subcellular location is the secreted. In terms of biological role, potassium channel inhibitor. The polypeptide is Potassium channel toxin alpha-KTx 9.8 (Buthus israelis (Israeli scorpion)).